A 591-amino-acid polypeptide reads, in one-letter code: Probable indole-3-acetic acid-amido synthetase GH3.11 (591 aa).

It belongs to the IAA-amido conjugating enzyme family. In terms of tissue distribution, expressed in etiolated and green seedlings, roots, callus and highly in flowers.

Functionally, may catalyze the synthesis of indole-3-acetic acid (IAA)-amino acid conjugates, providing a mechanism for the plant to cope with the presence of excess auxin. The chain is Probable indole-3-acetic acid-amido synthetase GH3.11 (GH3.11) from Oryza sativa subsp. japonica (Rice).